The sequence spans 195 residues: Recombination protein RecR (195 aa).

Residues 54 to 69 (CTICGSYTEDEICSIC) form a C4-type zinc finger. A Toprim domain is found at 77-172 (ATICVVGFPQ…NITRLASGLP (96 aa)).

The protein belongs to the RecR family.

Functionally, may play a role in DNA repair. It seems to be involved in an RecBC-independent recombinational process of DNA repair. It may act with RecF and RecO. This Treponema denticola (strain ATCC 35405 / DSM 14222 / CIP 103919 / JCM 8153 / KCTC 15104) protein is Recombination protein RecR.